Reading from the N-terminus, the 84-residue chain is MGGISIWQLLIVAVIVVLLFGTKKLGSIGSDLGASIKGFKKAMSDDDAKQDKTSQDADFTAKSIADKQGEAKKEDAKSQDKEQV.

A helical membrane pass occupies residues 1–21 (MGGISIWQLLIVAVIVVLLFG). 2 stretches are compositionally biased toward basic and acidic residues: residues 42–55 (AMSD…KTSQ) and 64–84 (IADK…KEQV). Residues 42–84 (AMSDDDAKQDKTSQDADFTAKSIADKQGEAKKEDAKSQDKEQV) form a disordered region.

The protein belongs to the TatA/E family. As to quaternary structure, the Tat system comprises two distinct complexes: a TatABC complex, containing multiple copies of TatA, TatB and TatC subunits, and a separate TatA complex, containing only TatA subunits. Substrates initially bind to the TatABC complex, which probably triggers association of the separate TatA complex to form the active translocon.

It localises to the cell inner membrane. In terms of biological role, part of the twin-arginine translocation (Tat) system that transports large folded proteins containing a characteristic twin-arginine motif in their signal peptide across membranes. TatA could form the protein-conducting channel of the Tat system. This chain is Sec-independent protein translocase protein TatA, found in Salmonella typhi.